The sequence spans 184 residues: Ribosome-recycling factor (184 aa).

This sequence belongs to the RRF family.

It is found in the cytoplasm. Responsible for the release of ribosomes from messenger RNA at the termination of protein biosynthesis. May increase the efficiency of translation by recycling ribosomes from one round of translation to another. The sequence is that of Ribosome-recycling factor from Borreliella afzelii (strain PKo) (Borrelia afzelii).